The following is a 306-amino-acid chain: Protoheme IX farnesyltransferase (306 aa).

8 helical membrane passes run 31 to 50 (VIELLLVTTAPVMILAQGGW), 55 to 77 (LILGVLVGGTLSAGSANAFNCYI), 104 to 124 (LVFAWIIGVASIVWLGVISNW), 125 to 145 (LAAALSLAAILFYVFVYTLWL), 168 to 188 (WAAVTGDISWAPVILFMIVFL), 218 to 235 (GRAAVGLQTILYAWATLA), 238 to 258 (LLLIPVAGMGLVYTLAALAGG), and 286 to 306 (ASISYLSLLFLAVGIDPLLPF).

It belongs to the UbiA prenyltransferase family. Protoheme IX farnesyltransferase subfamily.

The protein resides in the cell membrane. It catalyses the reaction heme b + (2E,6E)-farnesyl diphosphate + H2O = Fe(II)-heme o + diphosphate. The protein operates within porphyrin-containing compound metabolism; heme O biosynthesis; heme O from protoheme: step 1/1. Its function is as follows. Converts heme B (protoheme IX) to heme O by substitution of the vinyl group on carbon 2 of heme B porphyrin ring with a hydroxyethyl farnesyl side group. The protein is Protoheme IX farnesyltransferase of Clavibacter michiganensis subsp. michiganensis (strain NCPPB 382).